The sequence spans 228 residues: Cytochrome c oxidase subunit 2 (228 aa).

At methionine 1–histidine 26 the chain is on the mitochondrial intermembrane side. A helical membrane pass occupies residues threonine 27 to phenylalanine 47. Topologically, residues asparagine 48 to threonine 60 are mitochondrial matrix. Residues isoleucine 61 to leucine 81 form a helical membrane-spanning segment. The Mitochondrial intermembrane portion of the chain corresponds to arginine 82–asparagine 228. Positions 161, 196, 198, 200, 204, and 207 each coordinate Cu cation. Residue glutamate 198 coordinates Mg(2+).

This sequence belongs to the cytochrome c oxidase subunit 2 family. As to quaternary structure, component of the cytochrome c oxidase (complex IV, CIV), a multisubunit enzyme composed of a catalytic core of 3 subunits and several supernumerary subunits. The complex exists as a monomer or a dimer and forms supercomplexes (SCs) in the inner mitochondrial membrane with ubiquinol-cytochrome c oxidoreductase (cytochrome b-c1 complex, complex III, CIII). Cu cation is required as a cofactor.

The protein resides in the mitochondrion inner membrane. It catalyses the reaction 4 Fe(II)-[cytochrome c] + O2 + 8 H(+)(in) = 4 Fe(III)-[cytochrome c] + 2 H2O + 4 H(+)(out). Its function is as follows. Component of the cytochrome c oxidase, the last enzyme in the mitochondrial electron transport chain which drives oxidative phosphorylation. The respiratory chain contains 3 multisubunit complexes succinate dehydrogenase (complex II, CII), ubiquinol-cytochrome c oxidoreductase (cytochrome b-c1 complex, complex III, CIII) and cytochrome c oxidase (complex IV, CIV), that cooperate to transfer electrons derived from NADH and succinate to molecular oxygen, creating an electrochemical gradient over the inner membrane that drives transmembrane transport and the ATP synthase. Cytochrome c oxidase is the component of the respiratory chain that catalyzes the reduction of oxygen to water. Electrons originating from reduced cytochrome c in the intermembrane space (IMS) are transferred via the dinuclear copper A center (CU(A)) of subunit 2 and heme A of subunit 1 to the active site in subunit 1, a binuclear center (BNC) formed by heme A3 and copper B (CU(B)). The BNC reduces molecular oxygen to 2 water molecules using 4 electrons from cytochrome c in the IMS and 4 protons from the mitochondrial matrix. This is Cytochrome c oxidase subunit 2 (COXII) from Anopheles quadrimaculatus (Common malaria mosquito).